The primary structure comprises 886 residues: uncharacterized protein (886 aa).

The N-terminal stretch at 1–20 (MKILKSLVLLVLFIVMPAKA) is a signal peptide. 6 consecutive transmembrane segments (helical) span residues 520-540 (VIIF…IEVI), 563-583 (TYFF…VVGA), 609-629 (LLFI…IITI), 647-667 (IIAF…IILM), 680-700 (ISTL…FLLI), and 771-791 (FLVL…SYGL).

It belongs to the TrbL/VirB6 family.

The protein localises to the cell membrane. This is an uncharacterized protein from Rickettsia typhi (strain ATCC VR-144 / Wilmington).